A 128-amino-acid polypeptide reads, in one-letter code: Con-Ins F2 (128 aa).

Residues 1–24 (MTTSSYFLLVALGLLLYVCRSSFG) form the signal peptide. 4 disulfides stabilise this stretch: Cys-29-Cys-104, Cys-41-Cys-107, Cys-53-Cys-120, and Cys-106-Cys-111. The propeptide at 59–89 (LQGGTGKKRGRASLLRKRRAFLSMLKARAKR) is c peptide. The residue at position 115 (Glu-115) is a 4-carboxyglutamate; partial. Ser-127 is modified (serine amide).

Belongs to the insulin family. In terms of assembly, heterodimer of A and B chains; disulfide-linked. Expressed by the venom gland.

It is found in the secreted. In terms of biological role, this venom insulin facilitates prey capture by rapidly inducing hypoglycemic shock. Intraperitoneal injection of this peptide into zebrafish lowers blood glucose with the same potency than human insulin. In vivo, when applied to water, this peptide reduces overall locomotor activity of zebrafish larvae, observed as a significant decrease in the percentage of time spent swimming and movement frequency. The chain is Con-Ins F2 from Conus floridulus (Cone snail).